We begin with the raw amino-acid sequence, 342 residues long: Oxygen-dependent coproporphyrinogen-III oxidase (342 aa).

Position 98 (Ser-98) interacts with substrate. A divalent metal cation-binding residues include His-102 and His-112. The active-site Proton donor is His-112. Residue 114 to 116 participates in substrate binding; that stretch reads NYR. A divalent metal cation contacts are provided by His-146 and His-176. The tract at residues 266–301 is important for dimerization; it reads YVEFNLVWDRGTIFGLQTNGRTESILMSLPPLARWE.

Belongs to the aerobic coproporphyrinogen-III oxidase family. In terms of assembly, homodimer. A divalent metal cation serves as cofactor.

The protein localises to the cytoplasm. The catalysed reaction is coproporphyrinogen III + O2 + 2 H(+) = protoporphyrinogen IX + 2 CO2 + 2 H2O. The protein operates within porphyrin-containing compound metabolism; protoporphyrin-IX biosynthesis; protoporphyrinogen-IX from coproporphyrinogen-III (O2 route): step 1/1. Functionally, involved in the heme and chlorophyll biosynthesis. Catalyzes the aerobic oxidative decarboxylation of propionate groups of rings A and B of coproporphyrinogen-III to yield the vinyl groups in protoporphyrinogen-IX. In Prochlorococcus marinus (strain MIT 9301), this protein is Oxygen-dependent coproporphyrinogen-III oxidase.